A 481-amino-acid chain; its full sequence is Docking protein 1 (481 aa).

Met1 carries the N-acetylmethionine modification. In terms of domain architecture, PH spans 4–119; it reads AVMEGPLFLQ…WVQTLCRNAF (116 aa). Position 48 is a phosphoserine (Ser48). The 109-residue stretch at 151 to 259 folds into the IRS-type PTB domain; that stretch reads EGSQFWVTVQ…HRQKAQGKAG (109 aa). 2 positions are modified to phosphoserine: Ser269 and Ser291. The segment at 270–293 is disordered; the sequence is HEGEVAEGKLPSPPGPQELLDSPP. Phosphotyrosine is present on Tyr296. The segment at 307-329 is disordered; that stretch reads PCPSQDSLYSDPLDSTSAQAGEG. The segment covering 310-325 has biased composition (polar residues); it reads SQDSLYSDPLDSTSAQ. 2 positions are modified to phosphotyrosine: Tyr337 and Tyr341. Position 362 is a phosphotyrosine; by INSR (Tyr362). Tyr377 is subject to Phosphotyrosine. Tyr398 bears the Phosphotyrosine; by INSR mark. A disordered region spans residues 404 to 481; the sequence is PATDDYAVPP…KTGVKSEGST (78 aa). Tyr409 carries the phosphotyrosine modification. Phosphoserine is present on Ser416. The segment covering 436–458 has biased composition (polar residues); it reads ATGSGIKSHNSALYSQVQKSGAS. Tyr449 is modified (phosphotyrosine). A Phosphoserine modification is found at Ser460.

It belongs to the DOK family. Type A subfamily. As to quaternary structure, interacts with ABL1. Interacts with RasGAP and INPP5D/SHIP1. Interacts directly with phosphorylated ITGB3. Interacts with SRMS (via the SH2 and SH3 domains). In terms of processing, constitutively tyrosine-phosphorylated. Phosphorylated by TEC. Phosphorylated by LYN. Phosphorylated on tyrosine residues by the insulin receptor kinase. Results in the negative regulation of the insulin signaling pathway. Phosphorylated on tyrosine residues by SRMS. Expressed in pancreas, heart, leukocyte and spleen. Expressed in both resting and activated peripheral blood T-cells. Expressed in breast cancer.

It localises to the cytoplasm. The protein resides in the nucleus. Its subcellular location is the perinuclear region. Functionally, DOK proteins are enzymatically inert adaptor or scaffolding proteins. They provide a docking platform for the assembly of multimolecular signaling complexes. DOK1 appears to be a negative regulator of the insulin signaling pathway. Modulates integrin activation by competing with talin for the same binding site on ITGB3. This is Docking protein 1 (DOK1) from Homo sapiens (Human).